The chain runs to 155 residues: Small ribosomal subunit protein uS7c (155 aa).

This sequence belongs to the universal ribosomal protein uS7 family. Part of the 30S ribosomal subunit.

Its subcellular location is the plastid. It is found in the chloroplast. Its function is as follows. One of the primary rRNA binding proteins, it binds directly to 16S rRNA where it nucleates assembly of the head domain of the 30S subunit. The sequence is that of Small ribosomal subunit protein uS7c (rps7) from Pinus koraiensis (Korean pine).